Reading from the N-terminus, the 191-residue chain is Succinoglycan biosynthesis protein ExoI (191 aa).

The segment at 1 to 21 (MTRIKSAVAAGGRRAPHSARL) is disordered.

It participates in glycan metabolism; exopolysaccharide biosynthesis. This is Succinoglycan biosynthesis protein ExoI (exoI) from Rhizobium meliloti (strain 1021) (Ensifer meliloti).